The chain runs to 285 residues: Shikimate dehydrogenase (NADP(+)) (285 aa).

Shikimate contacts are provided by residues 19–21 and T66; that span reads SLS. The active-site Proton acceptor is the K70. N91 and D107 together coordinate shikimate. Residues 129 to 133 and L228 each bind NADP(+); that span reads GSGGA. Y230 is a binding site for shikimate. G251 serves as a coordination point for NADP(+).

The protein belongs to the shikimate dehydrogenase family. As to quaternary structure, homodimer.

The catalysed reaction is shikimate + NADP(+) = 3-dehydroshikimate + NADPH + H(+). Its pathway is metabolic intermediate biosynthesis; chorismate biosynthesis; chorismate from D-erythrose 4-phosphate and phosphoenolpyruvate: step 4/7. Its function is as follows. Involved in the biosynthesis of the chorismate, which leads to the biosynthesis of aromatic amino acids. Catalyzes the reversible NADPH linked reduction of 3-dehydroshikimate (DHSA) to yield shikimate (SA). The sequence is that of Shikimate dehydrogenase (NADP(+)) from Prochlorococcus marinus subsp. pastoris (strain CCMP1986 / NIES-2087 / MED4).